A 283-amino-acid polypeptide reads, in one-letter code: ATP phosphoribosyltransferase (283 aa).

It belongs to the ATP phosphoribosyltransferase family. Long subfamily. Mg(2+) is required as a cofactor.

The protein localises to the cytoplasm. The enzyme catalyses 1-(5-phospho-beta-D-ribosyl)-ATP + diphosphate = 5-phospho-alpha-D-ribose 1-diphosphate + ATP. It functions in the pathway amino-acid biosynthesis; L-histidine biosynthesis; L-histidine from 5-phospho-alpha-D-ribose 1-diphosphate: step 1/9. Feedback inhibited by histidine. Functionally, catalyzes the condensation of ATP and 5-phosphoribose 1-diphosphate to form N'-(5'-phosphoribosyl)-ATP (PR-ATP). Has a crucial role in the pathway because the rate of histidine biosynthesis seems to be controlled primarily by regulation of HisG enzymatic activity. This is ATP phosphoribosyltransferase from Bacteroides thetaiotaomicron (strain ATCC 29148 / DSM 2079 / JCM 5827 / CCUG 10774 / NCTC 10582 / VPI-5482 / E50).